Consider the following 110-residue polypeptide: MTYIVTDECVKCKYTDCVEVCPVDCFYEGEFMLVINPDECIDCGVCVPDCPIDAIKPESPELIEWVERAKDFIENQGWKNITKKKCALPDADKFKDEQDKFNKYIIKNMH.

2 4Fe-4S ferredoxin-type domains span residues 2 to 30 (TYIV…YEGE) and 31 to 60 (FMLV…PESP). The [3Fe-4S] cluster site is built by cysteine 9 and cysteine 17. The [4Fe-4S] cluster site is built by cysteine 21, cysteine 40, cysteine 43, and cysteine 46. Cysteine 50 serves as a coordination point for [3Fe-4S] cluster.

It depends on [4Fe-4S] cluster as a cofactor. The cofactor is [3Fe-4S] cluster.

Its function is as follows. Ferredoxins are iron-sulfur proteins that transfer electrons in a wide variety of metabolic reactions. This Rickettsia typhi (strain ATCC VR-144 / Wilmington) protein is Ferredoxin (fdxA).